The chain runs to 175 residues: Rubredoxin-1 (175 aa).

Rubredoxin-like domains are found at residues 1 to 53 and 119 to 170; these read MARY…FVLI and FLKW…YVLY. Cysteine 6, cysteine 9, cysteine 39, cysteine 42, cysteine 124, cysteine 127, cysteine 157, and cysteine 160 together coordinate Fe cation.

The protein belongs to the rubredoxin family. Fe(3+) serves as cofactor.

It localises to the cytoplasm. It functions in the pathway hydrocarbon metabolism; alkane degradation. Its function is as follows. Involved in the hydrocarbon hydroxylating system, which transfers electrons from NADH to rubredoxin reductase and then through rubredoxin to alkane 1 monooxygenase. In Pseudomonas putida (Arthrobacter siderocapsulatus), this protein is Rubredoxin-1 (alkG).